Reading from the N-terminus, the 584-residue chain is MALEDRCSPQSAPSPPGCLPHSPPQQHQHILQPNLRIHAIPISITALDMSLQPGTAATAATLYQQQQLQHLHQLQQLQQLHQQQLAASAGVFHHPSTSAAFDAAALHAAALQQRLSASGSPGAHSTGACSTPASTLTIKEEESDSILGDSFHNQTATTATEEDEEEDDDIDVDDTASVSGSARLPPPAHQQSKQSKPSLAFSISNILSDRFGDAAKQTKQGDSTGVSVSAAAAAASIFRPFEASRAAAATPSAFTRVDLLEFSRQQQAAAAAATAAMMLERANLLNCFNPAAYPRIHEELVQSRLRRSAAGNPNAVLPPTAKLTEPSVEKSALGSLCKTVSQIGQAQSTTPVTTPSSRPSQLASPPPASNASTISSSSSTAASCSASSSSGCSSAASSLNSSPSSRLAGANNASSPQPIPPPSAVSRDSGMESSDDTRSETGSTTTDGGKNEMWPAWVYCTRYSDRPSSGPRYRRPKQPKDKTNDEKRPRTAFSSEQLARLKREFNENRYLTERRRQQLSSELGLNEAQIKIWFQNKRAKIKKSTGSKNPLALQLMAQGLYNHTTVPLTKEEEELEMRMNGQIP.

Disordered regions lie at residues 1–27, 141–198, 343–380, 392–451, and 465–492; these read MALE…PQQH, EESD…SKPS, IGQA…SSST, CSSA…GGKN, and DRPS…PRTA. Positions 12-23 are enriched in pro residues; the sequence is APSPPGCLPHSP. The span at 160-174 shows a compositional bias: acidic residues; the sequence is TEEDEEEDDDIDVDD. A compositionally biased stretch (polar residues) spans 189–198; that stretch reads HQQSKQSKPS. Composition is skewed to low complexity over residues 348–380 and 392–405; these read STTP…SSST and CSSA…SPSS. A compositionally biased stretch (basic and acidic residues) spans 478–489; it reads QPKDKTNDEKRP. Residues 486 to 545 constitute a DNA-binding region (homeobox); it reads EKRPRTAFSSEQLARLKREFNENRYLTERRRQQLSSELGLNEAQIKIWFQNKRAKIKKST.

This sequence belongs to the engrailed homeobox family.

Its subcellular location is the nucleus. In terms of biological role, this protein specifies the body segmentation pattern. It is required for the development of the central nervous system. Transcriptional regulator that repress activated promoters. The polypeptide is Segmentation polarity homeobox protein engrailed (en) (Drosophila virilis (Fruit fly)).